We begin with the raw amino-acid sequence, 560 residues long: Membrane protein insertase YidC (560 aa).

Helical transmembrane passes span 5–25 (IINLIAAIILSLSIIFGWQYF), 334–354 (AIDFGWFYIITKPVFYAMNFF), 357–377 (YVGNFGVSILIVTVIIKLLMF), 431–451 (LPILVQIPVFFSIYKVLYVTI), 476–496 (LFGLLPFAPPSFLMIGAWPIL), and 522–542 (FMPLIFLFMFSSFPVGLLIYW).

Belongs to the OXA1/ALB3/YidC family. Type 1 subfamily. Interacts with the Sec translocase complex via SecD. Specifically interacts with transmembrane segments of nascent integral membrane proteins during membrane integration.

It localises to the cell inner membrane. Required for the insertion and/or proper folding and/or complex formation of integral membrane proteins into the membrane. Involved in integration of membrane proteins that insert both dependently and independently of the Sec translocase complex, as well as at least some lipoproteins. Aids folding of multispanning membrane proteins. The polypeptide is Membrane protein insertase YidC (Rickettsia rickettsii (strain Iowa)).